Here is a 514-residue protein sequence, read N- to C-terminus: tRNA-2-methylthio-N(6)-dimethylallyladenosine synthase (514 aa).

Residues 1-21 (MNEEQRKASSVDVLAERDKKA) form a disordered region. Positions 68–186 (RTFLIKTYGC…LPEILEEAYL (119 aa)) constitute an MTTase N-terminal domain. 6 residues coordinate [4Fe-4S] cluster: cysteine 77, cysteine 113, cysteine 147, cysteine 223, cysteine 227, and cysteine 230. The Radical SAM core domain occupies 209–440 (REGNIKAWVN…KKVGHYSQIA (232 aa)). The TRAM domain maps to 442–505 (SKYEGQTVTV…QYSLNGSFVK (64 aa)).

Belongs to the methylthiotransferase family. MiaB subfamily. Monomer. Requires [4Fe-4S] cluster as cofactor.

The protein localises to the cytoplasm. The catalysed reaction is N(6)-dimethylallyladenosine(37) in tRNA + (sulfur carrier)-SH + AH2 + 2 S-adenosyl-L-methionine = 2-methylsulfanyl-N(6)-dimethylallyladenosine(37) in tRNA + (sulfur carrier)-H + 5'-deoxyadenosine + L-methionine + A + S-adenosyl-L-homocysteine + 2 H(+). Catalyzes the methylthiolation of N6-(dimethylallyl)adenosine (i(6)A), leading to the formation of 2-methylthio-N6-(dimethylallyl)adenosine (ms(2)i(6)A) at position 37 in tRNAs that read codons beginning with uridine. The sequence is that of tRNA-2-methylthio-N(6)-dimethylallyladenosine synthase from Staphylococcus aureus (strain MRSA252).